The primary structure comprises 725 residues: Fatty acid oxidation complex subunit alpha (725 aa).

The segment at 1–189 is enoyl-CoA hydratase/isomerase; the sequence is MLYKGDTLYL…KIGLVDGVVK (189 aa). Asp-296 is a binding site for substrate. The interval 311–725 is 3-hydroxyacyl-CoA dehydrogenase; it reads ETPKQAAVLG…RLNQPVRLVL (415 aa). Residues Met-324, Asp-343, 400–402, Lys-407, and Ser-429 contribute to the NAD(+) site; that span reads VVE. Catalysis depends on His-450, which acts as the For 3-hydroxyacyl-CoA dehydrogenase activity. Asn-453 contributes to the NAD(+) binding site. Substrate contacts are provided by Asn-500 and Tyr-660.

This sequence in the N-terminal section; belongs to the enoyl-CoA hydratase/isomerase family. In the C-terminal section; belongs to the 3-hydroxyacyl-CoA dehydrogenase family. As to quaternary structure, heterotetramer of two alpha chains (FadB) and two beta chains (FadA).

It catalyses the reaction a (3S)-3-hydroxyacyl-CoA + NAD(+) = a 3-oxoacyl-CoA + NADH + H(+). It carries out the reaction a (3S)-3-hydroxyacyl-CoA = a (2E)-enoyl-CoA + H2O. The catalysed reaction is a 4-saturated-(3S)-3-hydroxyacyl-CoA = a (3E)-enoyl-CoA + H2O. The enzyme catalyses (3S)-3-hydroxybutanoyl-CoA = (3R)-3-hydroxybutanoyl-CoA. It catalyses the reaction a (3Z)-enoyl-CoA = a 4-saturated (2E)-enoyl-CoA. It carries out the reaction a (3E)-enoyl-CoA = a 4-saturated (2E)-enoyl-CoA. It functions in the pathway lipid metabolism; fatty acid beta-oxidation. Involved in the aerobic and anaerobic degradation of long-chain fatty acids via beta-oxidation cycle. Catalyzes the formation of 3-oxoacyl-CoA from enoyl-CoA via L-3-hydroxyacyl-CoA. It can also use D-3-hydroxyacyl-CoA and cis-3-enoyl-CoA as substrate. This Salmonella paratyphi A (strain ATCC 9150 / SARB42) protein is Fatty acid oxidation complex subunit alpha.